We begin with the raw amino-acid sequence, 376 residues long: Germination-specific cysteine protease 1 (376 aa).

Positions 1 to 22 (MAPSTKVLSLLLLYVVVSLASG) are cleaved as a signal peptide. Residues 23–144 (DESIINDHLQ…KYSAAVNGKE (122 aa)) constitute a propeptide, activation peptide. A glycan (N-linked (GlcNAc...) asparagine) is linked at Asn-93. Cystine bridges form between Cys-166–Cys-208, Cys-200–Cys-241, and Cys-299–Cys-351. Cys-169 is a catalytic residue. Catalysis depends on residues His-305 and Asn-325.

Belongs to the peptidase C1 family.

In terms of biological role, probable thiol protease. This Arabidopsis thaliana (Mouse-ear cress) protein is Germination-specific cysteine protease 1.